Consider the following 622-residue polypeptide: MTFLQFAYKNVTRNKRAYLAFFLSSAFSVLIFFTFAMFLFHPALKEGYLNNIAKKGLTAAEWMIFVFSFLFVLYSVNAFLKSRNKEFGILLMQGITPGQLRKLITAENMIIGVMSIAAGIIGGFIFSKTFFTVGAYILEMDALPLYMPWKALGITACGFLLLFFFLSQFTILFVRSNTVIKLIKGTGKVKPEPKPSVLLSLFGIACLCGGYGMVLKGNVHGAEPFIILLLTVIGTYFFFSQSSIWILRALKKWKTFYLRGKNIIWVSDLVYRLKDNARLFFIVSIISAVAFTATGVLAMYKSTVGAEESAYEMEYLSYSNNPKEQTHLKDIDHELKTHGFTYTKDKIDVSYVRYQEGETVPPVYMISESDAAKYFHVKVNGLKEDEAVYFPGTYDRNFKNEAPDQLKLLNQKGELSDQKLSVKEVKKPLISLNAIIAVNDQTFDQLKSLGDKASLYGYSYDHWKDSLEISQSLQNEIYGNYIDVHSDFASKAGTYYDTVQLPSLSLFIGLFIAIVFFVAAASFLYFRLFTDLDEDRERYRSLAKIGLSEREMAQSVTIQLAILFFFPFVIAVMHTLFALRTLAVEGYSDVAGPLSLTIGGFFIFQLLFFLAVRSSYLKKMNK.

10 helical membrane-spanning segments follow: residues 20–40 (AFFL…MFLF), 56–76 (GLTA…LYSV), 118–138 (AGII…AYIL), 154–174 (ITAC…ILFV), 195–215 (PSVL…GMVL), 219–239 (VHGA…YFFF), 279–299 (LFFI…VLAM), 498–518 (TVQL…VFFV), 558–578 (IQLA…TLFA), and 590–610 (VAGP…LFFL).

The protein belongs to the ABC-4 integral membrane protein family. In terms of assembly, the complex is composed of two ATP-binding proteins (YxdL) and two transmembrane proteins (YxdM).

Its subcellular location is the cell membrane. In terms of biological role, part of the ABC transporter complex YxdLM which could be involved in peptide resistance. The protein is ABC transporter permease protein YxdM (yxdM) of Bacillus subtilis (strain 168).